The chain runs to 500 residues: Probable malate:quinone oxidoreductase (500 aa).

The protein belongs to the MQO family. The cofactor is FAD.

The catalysed reaction is (S)-malate + a quinone = a quinol + oxaloacetate. The protein operates within carbohydrate metabolism; tricarboxylic acid cycle; oxaloacetate from (S)-malate (quinone route): step 1/1. This is Probable malate:quinone oxidoreductase from Bordetella avium (strain 197N).